A 173-amino-acid chain; its full sequence is MAEKRNIFLVGPMGAGKSTIGRQLAQQLNMEFYDSDQEIEKRTGADVGWVFDVEGEDGFRDREEKVINELTEKQGIVLATGGGSVKSRETRNRLSARGVVVYLETTIEKQLARTQRDKKRPLLQVEAPPREVLEALANERNPLYEEIADVTIRTDDQSAKVVANQIIHMLESN.

14-19 (GAGKST) contacts ATP. A Mg(2+)-binding site is contributed by serine 18. Substrate is bound by residues aspartate 36, arginine 60, and glycine 82. Position 120 (arginine 120) interacts with ATP. Arginine 140 is a binding site for substrate. An ATP-binding site is contributed by glutamine 157.

Belongs to the shikimate kinase family. Monomer. Mg(2+) is required as a cofactor.

It localises to the cytoplasm. The enzyme catalyses shikimate + ATP = 3-phosphoshikimate + ADP + H(+). It functions in the pathway metabolic intermediate biosynthesis; chorismate biosynthesis; chorismate from D-erythrose 4-phosphate and phosphoenolpyruvate: step 5/7. Catalyzes the specific phosphorylation of the 3-hydroxyl group of shikimic acid using ATP as a cosubstrate. This chain is Shikimate kinase 1, found in Citrobacter koseri (strain ATCC BAA-895 / CDC 4225-83 / SGSC4696).